The following is a 145-amino-acid chain: Small ribosomal subunit protein uS9 (145 aa).

The protein belongs to the universal ribosomal protein uS9 family.

The protein resides in the cytoplasm. The protein is Small ribosomal subunit protein uS9 (RPS16) of Fritillaria agrestis (Stinkbells).